A 428-amino-acid chain; its full sequence is MFAWYKAGSPQQKKTFWACYSGWALDSFDMQMFSFLLPALTLTWGLTKAEVGVLGTVALVVTAIGGWGAGILSDRYGRARILVLAIIWFTLFGVLAGFAQSYQQLLIARTLQGLGFGGEWAVGAALMAEVIDSRHRGKAIGFVQSGFALGWALAVVVATLLLAWLPKEMAWRVAFWSGIIPALIVLFIRRHVKDSSMFERARQSRAPRASLSSVFNRKYARTLALSSVLVIGLQAGCYAILVWLPSLLNQRQVAAGSMIVTVFIMAFGSFCGFAVTADLSDRIGRRPTLILLSVCAWIVTVSYMLLPLNTTLTAILGFLVGFSAIGMFAALGPFLSELFPTNVRTTCMGFAYNVGKSIGAGSVVGVGVLSTHIGLANAMGTFCLVAYAFAVFGIMLLPETRGIAIENIGEADAHSPAAPLAQPASARS.

The Cytoplasmic portion of the chain corresponds to 1–26 (MFAWYKAGSPQQKKTFWACYSGWALD). Residues 27–47 (SFDMQMFSFLLPALTLTWGLT) form a helical membrane-spanning segment. At 48 to 50 (KAE) the chain is on the periplasmic side. A helical transmembrane segment spans residues 51–71 (VGVLGTVALVVTAIGGWGAGI). Over 72–80 (LSDRYGRAR) the chain is Cytoplasmic. Residues 81–101 (ILVLAIIWFTLFGVLAGFAQS) form a helical membrane-spanning segment. Residues 102 to 110 (YQQLLIART) lie on the Periplasmic side of the membrane. Residues 111 to 131 (LQGLGFGGEWAVGAALMAEVI) form a helical membrane-spanning segment. At 132 to 145 (DSRHRGKAIGFVQS) the chain is on the cytoplasmic side. A helical membrane pass occupies residues 146-166 (GFALGWALAVVVATLLLAWLP). Residue Lys167 is a topological domain, periplasmic. The chain crosses the membrane as a helical span at residues 168-188 (EMAWRVAFWSGIIPALIVLFI). Over 189–227 (RRHVKDSSMFERARQSRAPRASLSSVFNRKYARTLALSS) the chain is Cytoplasmic. The chain crosses the membrane as a helical span at residues 228 to 248 (VLVIGLQAGCYAILVWLPSLL). Residues 249-252 (NQRQ) lie on the Periplasmic side of the membrane. The helical transmembrane segment at 253 to 273 (VAAGSMIVTVFIMAFGSFCGF) threads the bilayer. At 274–287 (AVTADLSDRIGRRP) the chain is on the cytoplasmic side. A helical transmembrane segment spans residues 288–308 (TLILLSVCAWIVTVSYMLLPL). At 309-314 (NTTLTA) the chain is on the periplasmic side. Residues 315-335 (ILGFLVGFSAIGMFAALGPFL) traverse the membrane as a helical segment. The Cytoplasmic segment spans residues 336–356 (SELFPTNVRTTCMGFAYNVGK). Residues 357–371 (SIGAGSVVGVGVLST) traverse the membrane as a helical segment. At 372–377 (HIGLAN) the chain is on the periplasmic side. A helical membrane pass occupies residues 378–398 (AMGTFCLVAYAFAVFGIMLLP). The Cytoplasmic portion of the chain corresponds to 399–428 (ETRGIAIENIGEADAHSPAAPLAQPASARS).

It belongs to the major facilitator superfamily. Sugar transporter (TC 2.A.1.1) family.

Its subcellular location is the cell inner membrane. Probable uptake of 4-methylmuconolactone. The polypeptide is Probable 4-methylmuconolactone transporter (Cupriavidus pinatubonensis (strain JMP 134 / LMG 1197) (Cupriavidus necator (strain JMP 134))).